The sequence spans 453 residues: Cytochrome P450 monooxygenase PC-20 (453 aa).

2 helical membrane passes run 5-25 (LGPF…LCVI) and 49-69 (LGVV…LFCV). Cys387 contributes to the heme binding site.

Belongs to the cytochrome P450 family. Requires heme as cofactor.

Its subcellular location is the membrane. The protein operates within secondary metabolite biosynthesis. Functionally, cytochrome P450 monooxygenase; part of the gene cluster that mediates the biosynthesis of the indole diterpenes penitrems. The geranylgeranyl diphosphate (GGPP) synthase penG catalyzes the first step in penitrem biosynthesis via conversion of farnesyl pyrophosphate and isopentyl pyrophosphate into geranylgeranyl pyrophosphate (GGPP). Condensation of indole-3-glycerol phosphate with GGPP by the prenyl transferase penC then forms 3-geranylgeranylindole (3-GGI). Epoxidation by the FAD-dependent monooxygenase penM leads to a epoxidized-GGI that is substrate of the terpene cyclase penB for cyclization to yield paspaline. Paspaline is subsequently converted to 13-desoxypaxilline by the cytochrome P450 monooxygenase penP, the latter being then converted to paxilline by the cytochrome P450 monooxygenase penQ. Paxilline is converted to beta-paxitriol via C-10 ketoreduction by the short-chain dehydrogenase PC-15 which can be monoprenylated at the C-20 by the indole diterpene prenyltransferase penD. A two-step elimination (acetylation and elimination) process performed by the O-acetyltransferase PC-16 and the P.simplicissimum ptmI-ortholog not yet identified in P.crustosum, leads to the production of the prenylated form of penijanthine. The FAD-linked oxidoreductase ptmO then converts the prenylated form of penijanthine into PC-M5 which is in turn transformed into PC-M4 by the aromatic dimethylallyltransferase PC-22. A series of oxidation steps involving 4 cytochrome P450 monooxygenases (PC-21, PC-05, PC-23, PC-20) and a FAD-dependent monooxygenase (PC-14) are required for the transformation of PC-M4 to penitrems A and E. Synthesis of these final products is proposed to proceed via penitrems D and C (PC-21, PC-05, PC-14) and penitrems B and F (PC-21, PC-05, PC-14, PC-23). The chain is Cytochrome P450 monooxygenase PC-20 from Penicillium crustosum (Blue mold fungus).